Reading from the N-terminus, the 283-residue chain is Bifunctional protein FolD (283 aa).

Residues 166 to 168, S191, and I232 each bind NADP(+); that span reads GRS.

It belongs to the tetrahydrofolate dehydrogenase/cyclohydrolase family. Homodimer.

The enzyme catalyses (6R)-5,10-methylene-5,6,7,8-tetrahydrofolate + NADP(+) = (6R)-5,10-methenyltetrahydrofolate + NADPH. The catalysed reaction is (6R)-5,10-methenyltetrahydrofolate + H2O = (6R)-10-formyltetrahydrofolate + H(+). The protein operates within one-carbon metabolism; tetrahydrofolate interconversion. Its function is as follows. Catalyzes the oxidation of 5,10-methylenetetrahydrofolate to 5,10-methenyltetrahydrofolate and then the hydrolysis of 5,10-methenyltetrahydrofolate to 10-formyltetrahydrofolate. This is Bifunctional protein FolD from Rickettsia bellii (strain RML369-C).